The following is a 262-amino-acid chain: Snake venom serine protease catroxase-1 (262 aa).

The N-terminal stretch at 1–18 (MVLIRVLANLLILQLSYA) is a signal peptide. Positions 19–24 (QKSSEP) are excised as a propeptide. The 226-residue stretch at 25–250 (IIGGDECNRN…HLDWIQSIIA (226 aa)) folds into the Peptidase S1 domain. Cystine bridges form between Cys-31–Cys-162, Cys-49–Cys-65, Cys-97–Cys-257, Cys-141–Cys-211, Cys-173–Cys-190, and Cys-201–Cys-226. Catalysis depends on His-64, which acts as the Charge relay system. Asn-102 carries an N-linked (GlcNAc...) asparagine glycan. Asp-109 acts as the Charge relay system in catalysis. Asn-169 carries an N-linked (GlcNAc...) asparagine glycan. Ser-205 acts as the Charge relay system in catalysis.

The protein belongs to the peptidase S1 family. Snake venom subfamily. In terms of assembly, monomer. Expressed by the venom gland.

It is found in the secreted. Functionally, snake venom serine protease that may act in the hemostasis system of the prey. The polypeptide is Snake venom serine protease catroxase-1 (Crotalus atrox (Western diamondback rattlesnake)).